The following is a 364-amino-acid chain: MKFLKNVLEEGSKLEEFNELELSPEDKELLEYLQQTKAKITVVGCGGAGNNTITRLKMEGIEGAKTVAINTDAQQLIRTKADKKILIGKKLTRGLGAGGNPKIGEEAAKESAEEIKAAIQDSDMVFITCGLGGGTGTGSAPVVAEISKKIGALTVAVVTLPFVMEGKVRMKNAMEGLERLKQHTDTLVVIPNEKLFEIVPNMPLKLAFKVADEVLINAVKGLVELITKDGLINVDFADVKAVMNNGGLAMIGIGESDSEKRAKEAVSMALNSPLLDVDIDGATGALIHVMGPEDLTLEEAREVVATVSSRLDPNATIIWGATIDENLENTVRVLLVITGVQSRIEFTDTGLKRKKLELTGIPKI.

GTP is bound by residues 47–48 (GA), 97–99 (AGG), 134–136 (GTG), Glu-165, Arg-169, and Asp-212.

It belongs to the FtsZ family. As to quaternary structure, homodimer. Polymerizes to form a dynamic ring structure in a strictly GTP-dependent manner. Interacts directly with several other division proteins.

Its subcellular location is the cytoplasm. Essential cell division protein that forms a contractile ring structure (Z ring) at the future cell division site. The regulation of the ring assembly controls the timing and the location of cell division. One of the functions of the FtsZ ring is to recruit other cell division proteins to the septum to produce a new cell wall between the dividing cells. Binds GTP and shows GTPase activity. This Methanocaldococcus jannaschii (strain ATCC 43067 / DSM 2661 / JAL-1 / JCM 10045 / NBRC 100440) (Methanococcus jannaschii) protein is Cell division protein FtsZ 1.